The following is a 281-amino-acid chain: Phosphatidylserine decarboxylase proenzyme (281 aa).

Active-site charge relay system; for autoendoproteolytic cleavage activity residues include aspartate 90, histidine 143, and serine 248. The Schiff-base intermediate with substrate; via pyruvic acid; for decarboxylase activity role is filled by serine 248. Serine 248 carries the pyruvic acid (Ser); by autocatalysis modification.

This sequence belongs to the phosphatidylserine decarboxylase family. PSD-B subfamily. Prokaryotic type I sub-subfamily. Heterodimer of a large membrane-associated beta subunit and a small pyruvoyl-containing alpha subunit. Requires pyruvate as cofactor. Is synthesized initially as an inactive proenzyme. Formation of the active enzyme involves a self-maturation process in which the active site pyruvoyl group is generated from an internal serine residue via an autocatalytic post-translational modification. Two non-identical subunits are generated from the proenzyme in this reaction, and the pyruvate is formed at the N-terminus of the alpha chain, which is derived from the carboxyl end of the proenzyme. The autoendoproteolytic cleavage occurs by a canonical serine protease mechanism, in which the side chain hydroxyl group of the serine supplies its oxygen atom to form the C-terminus of the beta chain, while the remainder of the serine residue undergoes an oxidative deamination to produce ammonia and the pyruvoyl prosthetic group on the alpha chain. During this reaction, the Ser that is part of the protease active site of the proenzyme becomes the pyruvoyl prosthetic group, which constitutes an essential element of the active site of the mature decarboxylase.

It localises to the cell membrane. The catalysed reaction is a 1,2-diacyl-sn-glycero-3-phospho-L-serine + H(+) = a 1,2-diacyl-sn-glycero-3-phosphoethanolamine + CO2. It participates in phospholipid metabolism; phosphatidylethanolamine biosynthesis; phosphatidylethanolamine from CDP-diacylglycerol: step 2/2. Catalyzes the formation of phosphatidylethanolamine (PtdEtn) from phosphatidylserine (PtdSer). The protein is Phosphatidylserine decarboxylase proenzyme of Francisella philomiragia subsp. philomiragia (strain ATCC 25017 / CCUG 19701 / FSC 153 / O#319-036).